Here is a 1001-residue protein sequence, read N- to C-terminus: Integrator complex subunit 7 (1001 aa).

The tract at residues 980-1001 (DPSKQGAPAPSTSQAVGQTRRF) is disordered. Polar residues predominate over residues 989–1001 (PSTSQAVGQTRRF).

The protein belongs to the Integrator subunit 7 family. In terms of assembly, belongs to the multiprotein complex Integrator, at least composed of IntS1, IntS2, IntS3, IntS4, omd/IntS5, IntS6, defl/IntS7, IntS8, IntS9, IntS10, IntS11, IntS12, asun/IntS13, IntS14 and IntS15. The core complex associates with protein phosphatase 2A subunits mts/PP2A and Pp2A-29B, to form the Integrator-PP2A (INTAC) complex.

It is found in the nucleus. The protein localises to the cytoplasm. Its function is as follows. Component of the integrator complex, a multiprotein complex that terminates RNA polymerase II (Pol II) transcription in the promoter-proximal region of genes. The integrator complex provides a quality checkpoint during transcription elongation by driving premature transcription termination of transcripts that are unfavorably configured for transcriptional elongation: the complex terminates transcription by (1) catalyzing dephosphorylation of the C-terminal domain (CTD) of Pol II subunit Polr2A/Rbp1 and Spt5, and (2) degrading the exiting nascent RNA transcript via endonuclease activity. The integrator complex is also involved in the 3'-end processing of the U7 snRNA, and also the spliceosomal snRNAs U1, U2, U4 and U5. The polypeptide is Integrator complex subunit 7 (Drosophila melanogaster (Fruit fly)).